The chain runs to 144 residues: Putative sugar phosphate isomerase RBE_0278 (144 aa).

His-12 provides a ligand contact to substrate. His-101 (proton donor) is an active-site residue. Arg-135 lines the substrate pocket.

The protein belongs to the LacAB/RpiB family.

In Rickettsia bellii (strain RML369-C), this protein is Putative sugar phosphate isomerase RBE_0278.